A 252-amino-acid polypeptide reads, in one-letter code: Large ribosomal subunit protein uL29m (252 aa).

Lys146 is modified (N6-acetyllysine).

This sequence belongs to the universal ribosomal protein uL29 family. As to quaternary structure, component of the mitochondrial ribosome large subunit (39S) which comprises a 16S rRNA and about 50 distinct proteins.

Its subcellular location is the mitochondrion. The polypeptide is Large ribosomal subunit protein uL29m (MRPL47) (Bos taurus (Bovine)).